Reading from the N-terminus, the 150-residue chain is Ubiquitin-conjugating enzyme E2 3 (150 aa).

Residues 4–150 (PAKKRLMWDF…VIEIVEQSYV (147 aa)) enclose the UBC core domain. Residue cysteine 88 is the Glycyl thioester intermediate of the active site.

Belongs to the ubiquitin-conjugating enzyme family. Expressed in all tissues examined. Lower levels found in leaves.

The catalysed reaction is S-ubiquitinyl-[E1 ubiquitin-activating enzyme]-L-cysteine + [E2 ubiquitin-conjugating enzyme]-L-cysteine = [E1 ubiquitin-activating enzyme]-L-cysteine + S-ubiquitinyl-[E2 ubiquitin-conjugating enzyme]-L-cysteine.. It functions in the pathway protein modification; protein ubiquitination. Accepts the ubiquitin from the E1 complex and catalyzes its covalent attachment to other proteins. This is Ubiquitin-conjugating enzyme E2 3 (UBC3) from Arabidopsis thaliana (Mouse-ear cress).